Here is a 65-residue protein sequence, read N- to C-terminus: Translational regulator CsrA (65 aa).

This sequence belongs to the CsrA/RsmA family. Homodimer; the beta-strands of each monomer intercalate to form a hydrophobic core, while the alpha-helices form wings that extend away from the core.

The protein resides in the cytoplasm. A translational regulator that binds mRNA to regulate translation initiation and/or mRNA stability. Usually binds in the 5'-UTR at or near the Shine-Dalgarno sequence preventing ribosome-binding, thus repressing translation. Its main target seems to be the major flagellin gene, while its function is anatagonized by FliW. The chain is Translational regulator CsrA from Bordetella petrii (strain ATCC BAA-461 / DSM 12804 / CCUG 43448).